Consider the following 432-residue polypeptide: Transcriptional adapter 3 (432 aa).

A Glycyl lysine isopeptide (Lys-Gly) (interchain with G-Cter in SUMO2) cross-link involves residue Lys-21. The stretch at 40–69 (IEELDTLQLELETLLSSASRRLRVLEAETQ) forms a coiled coil. The segment at 87–127 (GRDHELGAPPKHGKPKKQKLEGKTGHGPGPGPGRPKSKNVQ) is disordered. Residue Lys-129 forms a Glycyl lysine isopeptide (Lys-Gly) (interchain with G-Cter in SUMO2) linkage. Residues 272–319 (NIISPMEDSPIPDMSGKESGADGASTSPRNQNKPFSVPHTKSLESRIK) form a disordered region. Residues Ser-280 and Ser-298 each carry the phosphoserine modification. A compositionally biased stretch (polar residues) spans 295 to 305 (ASTSPRNQNKP). Residues 367-407 (LLRLAKEEVSRQELRQRVRMADNEVMDAFRKIMAARQKKRT) adopt a coiled-coil conformation. An N6-acetyllysine modification is found at Lys-418.

Belongs to the NGG1 family. As to quaternary structure, the PCAF complex is composed of a number of TBP-associated factors (TAFS), such as TAF5, TAF5L, TAF6, TAF6L, TAF9, TAF10 and TAF12, PCAF, and also PCAF-associated factors (PAFs), such as TADA2L/ADA2, TADA3L/ADA3 and SPT3. Interacts directly with TADA2L and PCAF and also with the high-risk HPV oncoprotein E6. Component of the STAGA transcription coactivator-HAT complex, at least composed of SUPT3H, GCN5L2, TAF5L, TAF6L, SUPT7L, TADA3L, TAD1L, TAF10, TAF12, TRRAP and TAF9. Component of the TFTC-HAT complex. Component of the ADA2A-containing complex (ATAC), composed of KAT14, KAT2A, TADA2L, TADA3L, ZZ3, MBIP, WDR5, YEATS2, CCDC101 and DR1.

The protein localises to the nucleus. Functionally, functions as a component of the PCAF complex. The PCAF complex is capable of efficiently acetylating histones in a nucleosomal context. The PCAF complex could be considered as the human version of the yeast SAGA complex. Also known as a coactivator for p53/TP53-dependent transcriptional activation. Component of the ATAC complex, a complex with histone acetyltransferase activity on histones H3 and H4. The polypeptide is Transcriptional adapter 3 (Tada3) (Mus musculus (Mouse)).